An 815-amino-acid polypeptide reads, in one-letter code: BTB/POZ domain-containing protein KCTD3 (815 aa).

The region spanning 18-87 is the BTB domain; that stretch reads EIVQLNVGGT…LRTKELDLRG (70 aa). Residues 139–168 are compositionally biased toward polar residues; it reads INNTVRSADSRNGLNSTEGEARGNGTQPVL. Residues 139–170 are disordered; the sequence is INNTVRSADSRNGLNSTEGEARGNGTQPVLSG. 8 WD repeats span residues 174-218, 224-263, 270-305, 310-342, 354-404, 412-449, 457-504, and 510-569; these read ETVR…GWQQ, YLDWTIERVALNAKVVGGPHGDKDKMVAVASESSIILWSV, SEIGVFSLGVPVDALFFIGNQLVATSHTGKVGVWNA, WQVQDVVPITSYDTAGSFLLLGCNNGSIYYIDM, LLVT…VQHP, QLFQTFTVHRSPVTKIMLSEKHLVSVCADNNHVRTWTV, STQP…IQKV, and KLFV…MWDL. Positions 512 to 815 are interaction with HCN3; that stretch reads FVRLSSTGKR…SDSSGQEYSL (304 aa). A phosphoserine mark is found at S604, S664, and S711. Over residues 736-758 the composition is skewed to basic and acidic residues; it reads SESKKRSSEDENENKIEFRKKGG. The tract at residues 736-815 is disordered; sequence SESKKRSSED…SDSSGQEYSL (80 aa). Residues 774–800 are compositionally biased toward low complexity; it reads ASSPSTSDGGTDSPGTASPSPTKTTPS. A Phosphoserine modification is found at S793.

This sequence belongs to the KCTD3 family. As to quaternary structure, interacts with HCN3. As to expression, broadly expressed in normal tissues.

It is found in the cell membrane. Functionally, accessory subunit of potassium/sodium hyperpolarization-activated cyclic nucleotide-gated channel 3 (HCN3) up-regulating its cell-surface expression and current density without affecting its voltage dependence and kinetics. This chain is BTB/POZ domain-containing protein KCTD3 (KCTD3), found in Homo sapiens (Human).